We begin with the raw amino-acid sequence, 171 residues long: MSALDNKAVRGYIQKLVGDEGMAVVEKMIEKVPDQEVTDEQVAQISGINLNLVRKTLYILYENHLAMYRRERDKDSGWLTYLWKLDLDNSVHMLRNEARKLIKKLERRLEFESNEFYICQEEAPHRILFDYAMETNFVCPVDETPLMHYDNTAEKQALRNRIDDLKKSLAQ.

An HTH TFE/IIEalpha-type domain is found at 5–91 (DNKAVRGYIQ…LWKLDLDNSV (87 aa)).

The protein belongs to the TFE family. As to quaternary structure, monomer. Interaction with RNA polymerase subunits RpoF and RpoE is necessary for Tfe stimulatory transcription activity. Able to interact with Tbp and RNA polymerase in the absence of DNA promoter. Interacts both with the preinitiation and elongation complexes.

In terms of biological role, transcription factor that plays a role in the activation of archaeal genes transcribed by RNA polymerase. Facilitates transcription initiation by enhancing TATA-box recognition by TATA-box-binding protein (Tbp), and transcription factor B (Tfb) and RNA polymerase recruitment. Not absolutely required for transcription in vitro, but particularly important in cases where Tbp or Tfb function is not optimal. It dynamically alters the nucleic acid-binding properties of RNA polymerases by stabilizing the initiation complex and destabilizing elongation complexes. Seems to translocate with the RNA polymerase following initiation and acts by binding to the non template strand of the transcription bubble in elongation complexes. The chain is Transcription factor E from Methanocella arvoryzae (strain DSM 22066 / NBRC 105507 / MRE50).